An 87-amino-acid chain; its full sequence is Omega-lycotoxin-Am1c (87 aa).

The N-terminal stretch at 1 to 17 (MKLSIFFVLFFIAIAYC) is a signal peptide. Positions 18-40 (QPEFLDDEEDEVEETLPVAEEGR) are excised as a propeptide. Disulfide bonds link cysteine 44–cysteine 59, cysteine 51–cysteine 64, cysteine 58–cysteine 84, and cysteine 66–cysteine 82.

Belongs to the neurotoxin omega-lctx family. Expressed by the venom gland.

The protein resides in the secreted. Functionally, modulates Cav2.1/CACNA1A voltage-gated calcium channels (P/Q-type currents) in rat cerebellar Purkinje cells and hippocampal CA1-CA3 neurons. At saturating concentrations (&gt;10 nM) decelerates activation kinetics and slightly increases peak amplitude without affecting deactivation kinetics. In vivo, does not cause death when intravenously injected into mice. In rat models, through its activity on Cav2.1/CACNA1A, has an ameliorative effect on memory defects provoked by hyperstimulation of N-methyl-D-aspartate receptors (NMDARs) in the hippocampus. This Alopecosa marikovskyi (Wolf spider) protein is Omega-lycotoxin-Am1c.